The chain runs to 174 residues: Adenylate kinase (174 aa).

An NMP region spans residues 12 to 41 (STGDMLRAAIKAGTPLGLEAKKIIDEGGLV). Residues T13, R18, 39-41 (GLV), 67-70 (GFPR), and Q74 each bind AMP. Positions 104 to 141 (GRRVHLASGRTYHVTYNPPKVEGKDDVTGEDLIQRDDD) are LID. ATP is bound by residues R105 and 114-115 (TY). Residues R138 and R149 each coordinate AMP.

This sequence belongs to the adenylate kinase family. Monomer.

It is found in the cytoplasm. It catalyses the reaction AMP + ATP = 2 ADP. The protein operates within purine metabolism; AMP biosynthesis via salvage pathway; AMP from ADP: step 1/1. In terms of biological role, catalyzes the reversible transfer of the terminal phosphate group between ATP and AMP. Plays an important role in cellular energy homeostasis and in adenine nucleotide metabolism. The chain is Adenylate kinase from Neisseria lactamica.